We begin with the raw amino-acid sequence, 456 residues long: Glycerol-3-phosphate acyltransferase 4 (456 aa).

The N-terminal stretch at 1–37 (MFLLLPFDSLIVNLLGISLTVLFTLLLVFIIVPAIFG) is a signal peptide. The next 2 helical transmembrane spans lie at 156-176 (ISLR…CFLL) and 180-200 (IALA…VGYL). Asn-247 carries N-linked (GlcNAc...) asparagine glycosylation. The HXXXXD motif motif lies at 248-253 (HTSPID). N-linked (GlcNAc...) asparagine glycans are attached at residues Asn-327, Asn-328, and Asn-362.

Belongs to the 1-acyl-sn-glycerol-3-phosphate acyltransferase family.

The protein localises to the endoplasmic reticulum membrane. The catalysed reaction is sn-glycerol 3-phosphate + an acyl-CoA = a 1-acyl-sn-glycero-3-phosphate + CoA. It carries out the reaction dodecanoyl-CoA + sn-glycerol 3-phosphate = 1-dodecanoyl-sn-glycerol 3-phosphate + CoA. The enzyme catalyses sn-glycerol 3-phosphate + hexadecanoyl-CoA = 1-hexadecanoyl-sn-glycero-3-phosphate + CoA. It catalyses the reaction sn-glycerol 3-phosphate + octadecanoyl-CoA = 1-octadecanoyl-sn-glycero-3-phosphate + CoA. The catalysed reaction is sn-glycerol 3-phosphate + (9Z)-octadecenoyl-CoA = 1-(9Z-octadecenoyl)-sn-glycero-3-phosphate + CoA. It carries out the reaction (9Z,12Z)-octadecadienoyl-CoA + sn-glycerol 3-phosphate = 1-(9Z,12Z)-octadecadienoyl-sn-glycero-3-phosphate + CoA. It functions in the pathway phospholipid metabolism; CDP-diacylglycerol biosynthesis; CDP-diacylglycerol from sn-glycerol 3-phosphate: step 1/3. Functionally, converts glycerol-3-phosphate to 1-acyl-sn-glycerol-3-phosphate (lysophosphatidic acid or LPA) by incorporating an acyl moiety at the sn-1 position of the glycerol backbone. Active against both saturated and unsaturated long-chain fatty acyl-CoAs. Protects cells against lipotoxicity. The sequence is that of Glycerol-3-phosphate acyltransferase 4 from Pongo abelii (Sumatran orangutan).